The primary structure comprises 34 residues: Putative protein YmiB (34 aa).

The helical transmembrane segment at 7–24 (TAAKRIVFFIYLFVIQFW) threads the bilayer.

Its subcellular location is the membrane. The sequence is that of Putative protein YmiB (ymiB) from Escherichia coli (strain K12).